We begin with the raw amino-acid sequence, 120 residues long: Ribonuclease P protein component (120 aa).

This sequence belongs to the RnpA family. Consists of a catalytic RNA component (M1 or rnpB) and a protein subunit.

The enzyme catalyses Endonucleolytic cleavage of RNA, removing 5'-extranucleotides from tRNA precursor.. RNaseP catalyzes the removal of the 5'-leader sequence from pre-tRNA to produce the mature 5'-terminus. It can also cleave other RNA substrates such as 4.5S RNA. The protein component plays an auxiliary but essential role in vivo by binding to the 5'-leader sequence and broadening the substrate specificity of the ribozyme. The chain is Ribonuclease P protein component from Pseudoalteromonas atlantica (strain T6c / ATCC BAA-1087).